The following is a 474-amino-acid chain: tRNA-2-methylthio-N(6)-dimethylallyladenosine synthase (474 aa).

Residues 3 to 120 (KKLLIKTWGC…LPQMIKDSQS (118 aa)) form the MTTase N-terminal domain. [4Fe-4S] cluster is bound by residues Cys-12, Cys-49, Cys-83, Cys-157, Cys-161, and Cys-164. A Radical SAM core domain is found at 143-375 (RADGVTAFVS…QQQINTQAMR (233 aa)). A TRAM domain is found at 378-441 (RQMLNTEQRI…TNSLRGELVR (64 aa)).

This sequence belongs to the methylthiotransferase family. MiaB subfamily. Monomer. The cofactor is [4Fe-4S] cluster.

The protein resides in the cytoplasm. It catalyses the reaction N(6)-dimethylallyladenosine(37) in tRNA + (sulfur carrier)-SH + AH2 + 2 S-adenosyl-L-methionine = 2-methylsulfanyl-N(6)-dimethylallyladenosine(37) in tRNA + (sulfur carrier)-H + 5'-deoxyadenosine + L-methionine + A + S-adenosyl-L-homocysteine + 2 H(+). Catalyzes the methylthiolation of N6-(dimethylallyl)adenosine (i(6)A), leading to the formation of 2-methylthio-N6-(dimethylallyl)adenosine (ms(2)i(6)A) at position 37 in tRNAs that read codons beginning with uridine. The chain is tRNA-2-methylthio-N(6)-dimethylallyladenosine synthase from Photobacterium profundum (strain SS9).